The chain runs to 557 residues: uncharacterized protein (557 aa).

The N-terminal stretch at 1 to 30 (MAPRRRRHTRIAGLRVVGTATLVAATTLTA) is a signal peptide. Residue Cys-31 is the site of N-palmitoyl cysteine attachment. The S-diacylglycerol cysteine moiety is linked to residue Cys-31.

To M.bovis Mb2616c and M.leprae ML0489.

It localises to the cell membrane. This is an uncharacterized protein from Mycobacterium tuberculosis (strain CDC 1551 / Oshkosh).